A 233-amino-acid chain; its full sequence is Cytidylate kinase (233 aa).

15-23 is an ATP binding site; it reads GPSGAGKSS. Basic and acidic residues predominate over residues 183 to 200; sequence QRDRQDEGREHAPLKQAE. A disordered region spans residues 183-203; sequence QRDRQDEGREHAPLKQAEDAV.

It belongs to the cytidylate kinase family. Type 1 subfamily.

It localises to the cytoplasm. The enzyme catalyses CMP + ATP = CDP + ADP. It carries out the reaction dCMP + ATP = dCDP + ADP. The chain is Cytidylate kinase from Geobacter sp. (strain M21).